A 309-amino-acid chain; its full sequence is MKSITVEKLMKDLNMEELNSIEATALLISTTDLNRPGMQLAGFFDYFAYERIQIIGKVEHRYLETLDTKTRKERLDRMMSYDIPCLIISRGLEVPEELLCTANKYQRKILRSHKNTTKLISKVINYLEDTLAPTITLHGVLMDIYGVGVLITGKSGIGKSETAVELIKRGHLLVADDAVEIKRIGHEVLQGCAPEIIRHMIEVRGIGILDVKSLFGVGAIKIKTDIDLIIDLEEWDSTKSYDRLGLDDNHREILGMKIDEVTIPIKPARNIALIIEVAARNHRQKKMGYHAAQEFNDRLMKSLEEKSQQ.

Active-site residues include His-138 and Lys-159. 153–160 (GKSGIGKS) contacts ATP. Ser-160 contacts Mg(2+). Residue Asp-177 is the Proton acceptor; for phosphorylation activity. Proton donor; for dephosphorylation activity of the active site. The tract at residues 201-210 (IEVRGIGILD) is important for the catalytic mechanism of both phosphorylation and dephosphorylation. Mg(2+) is bound at residue Glu-202. Residue Arg-243 is part of the active site. Positions 264–269 (PIKPAR) are important for the catalytic mechanism of dephosphorylation.

It belongs to the HPrK/P family. In terms of assembly, homohexamer. Mg(2+) is required as a cofactor.

The enzyme catalyses [HPr protein]-L-serine + ATP = [HPr protein]-O-phospho-L-serine + ADP + H(+). It catalyses the reaction [HPr protein]-O-phospho-L-serine + phosphate + H(+) = [HPr protein]-L-serine + diphosphate. Functionally, catalyzes the ATP- as well as the pyrophosphate-dependent phosphorylation of a specific serine residue in HPr, a phosphocarrier protein of the phosphoenolpyruvate-dependent sugar phosphotransferase system (PTS). HprK/P also catalyzes the pyrophosphate-producing, inorganic phosphate-dependent dephosphorylation (phosphorolysis) of seryl-phosphorylated HPr (P-Ser-HPr). The two antagonistic activities of HprK/P are regulated by several intracellular metabolites, which change their concentration in response to the absence or presence of rapidly metabolisable carbon sources (glucose, fructose, etc.) in the growth medium. Therefore, by controlling the phosphorylation state of HPr, HPrK/P is a sensor enzyme that plays a major role in the regulation of carbon metabolism and sugar transport: it mediates carbon catabolite repression (CCR), and regulates PTS-catalyzed carbohydrate uptake and inducer exclusion. The sequence is that of HPr kinase/phosphorylase from Alkaliphilus metalliredigens (strain QYMF).